The chain runs to 118 residues: UPF0102 protein STH1475 (118 aa).

It belongs to the UPF0102 family.

The chain is UPF0102 protein STH1475 from Symbiobacterium thermophilum (strain DSM 24528 / JCM 14929 / IAM 14863 / T).